A 210-amino-acid polypeptide reads, in one-letter code: Thymidylate kinase (210 aa).

11-18 (GVDGAGKT) contributes to the ATP binding site.

It belongs to the thymidylate kinase family.

The enzyme catalyses dTMP + ATP = dTDP + ADP. In terms of biological role, phosphorylation of dTMP to form dTDP in both de novo and salvage pathways of dTTP synthesis. This Mycoplasma genitalium (strain ATCC 33530 / DSM 19775 / NCTC 10195 / G37) (Mycoplasmoides genitalium) protein is Thymidylate kinase (tmk).